The sequence spans 415 residues: Serine hydroxymethyltransferase 1 (415 aa).

(6S)-5,6,7,8-tetrahydrofolate is bound by residues leucine 122 and glycine 126–leucine 128. Lysine 230 is subject to N6-(pyridoxal phosphate)lysine.

It belongs to the SHMT family. Homodimer. Requires pyridoxal 5'-phosphate as cofactor.

It is found in the cytoplasm. The catalysed reaction is (6R)-5,10-methylene-5,6,7,8-tetrahydrofolate + glycine + H2O = (6S)-5,6,7,8-tetrahydrofolate + L-serine. It participates in one-carbon metabolism; tetrahydrofolate interconversion. It functions in the pathway amino-acid biosynthesis; glycine biosynthesis; glycine from L-serine: step 1/1. Functionally, catalyzes the reversible interconversion of serine and glycine with tetrahydrofolate (THF) serving as the one-carbon carrier. This reaction serves as the major source of one-carbon groups required for the biosynthesis of purines, thymidylate, methionine, and other important biomolecules. Also exhibits THF-independent aldolase activity toward beta-hydroxyamino acids, producing glycine and aldehydes, via a retro-aldol mechanism. This chain is Serine hydroxymethyltransferase 1, found in Burkholderia thailandensis (strain ATCC 700388 / DSM 13276 / CCUG 48851 / CIP 106301 / E264).